The sequence spans 93 residues: Integration host factor subunit beta (93 aa).

The protein belongs to the bacterial histone-like protein family. As to quaternary structure, heterodimer of an alpha and a beta chain.

Its function is as follows. This protein is one of the two subunits of integration host factor, a specific DNA-binding protein that functions in genetic recombination as well as in transcriptional and translational control. The polypeptide is Integration host factor subunit beta (Vibrio parahaemolyticus serotype O3:K6 (strain RIMD 2210633)).